The primary structure comprises 484 residues: Ubiquinone biosynthesis monooxygenase COQ6, mitochondrial (484 aa).

A mitochondrion-targeting transit peptide spans 1 to 41 (MLSLAKAKLAVVGIGRQCVAVRTLNGARAVHRSFSSSEHDQ).

This sequence belongs to the UbiH/COQ6 family. In terms of assembly, component of a multi-subunit COQ enzyme complex, composed of at least coq3, coq4, coq5, coq6, coq7 and coq9. Interacts with coq8b and coq7. It depends on FAD as a cofactor.

Its subcellular location is the mitochondrion inner membrane. It localises to the golgi apparatus. The protein resides in the cell projection. The catalysed reaction is a 4-hydroxy-3-(all-trans-polyprenyl)benzoate + 2 reduced [2Fe-2S]-[ferredoxin] + O2 + 2 H(+) = a 3,4-dihydroxy-5-(all-trans-polyprenyl)benzoate + 2 oxidized [2Fe-2S]-[ferredoxin] + H2O. It carries out the reaction a 2-methoxy-6-(all-trans-polyprenyl)phenol + 2 reduced [2Fe-2S]-[ferredoxin] + O2 + 2 H(+) = a 2-methoxy-6-(all-trans-polyprenyl)benzene-1,4-diol + 2 oxidized [2Fe-2S]-[ferredoxin] + H2O. It functions in the pathway cofactor biosynthesis; ubiquinone biosynthesis. Functionally, FAD-dependent monooxygenase required for two non-consecutive steps during ubiquinone biosynthesis. Required for the C5-ring hydroxylation during ubiquinone biosynthesis by catalyzing the hydroxylation of 4-hydroxy-3-(all-trans-polyprenyl)benzoic acid to 3,4-dihydroxy-5-(all-trans-polyprenyl)benzoic acid. Also acts downstream of coq4, for the C1-hydroxylation during ubiquinone biosynthesis by catalyzing the hydroxylation of 2-methoxy-6-(all-trans-polyprenyl)phenol to 2-methoxy-6-(all-trans-polyprenyl)benzene-1,4-diol. The electrons required for the hydroxylation reaction are funneled indirectly to coq6 from NADPH via a ferredoxin/ferredoxin reductase system. The protein is Ubiquinone biosynthesis monooxygenase COQ6, mitochondrial of Danio rerio (Zebrafish).